A 70-amino-acid chain; its full sequence is Putative membrane protein insertion efficiency factor (70 aa).

This sequence belongs to the UPF0161 family.

It localises to the cell membrane. In terms of biological role, could be involved in insertion of integral membrane proteins into the membrane. This chain is Putative membrane protein insertion efficiency factor, found in Moorella thermoacetica (strain ATCC 39073 / JCM 9320).